A 180-amino-acid polypeptide reads, in one-letter code: NAD(P)H-quinone oxidoreductase subunit I, chloroplastic (180 aa).

4Fe-4S ferredoxin-type domains are found at residues 55-84 (GRIH…VDWR) and 95-124 (LNYS…MTEE). Residues Cys-64, Cys-67, Cys-70, Cys-74, Cys-104, Cys-107, Cys-110, and Cys-114 each contribute to the [4Fe-4S] cluster site.

This sequence belongs to the complex I 23 kDa subunit family. As to quaternary structure, NDH is composed of at least 16 different subunits, 5 of which are encoded in the nucleus. [4Fe-4S] cluster serves as cofactor.

It localises to the plastid. Its subcellular location is the chloroplast thylakoid membrane. It carries out the reaction a plastoquinone + NADH + (n+1) H(+)(in) = a plastoquinol + NAD(+) + n H(+)(out). The catalysed reaction is a plastoquinone + NADPH + (n+1) H(+)(in) = a plastoquinol + NADP(+) + n H(+)(out). Functionally, NDH shuttles electrons from NAD(P)H:plastoquinone, via FMN and iron-sulfur (Fe-S) centers, to quinones in the photosynthetic chain and possibly in a chloroplast respiratory chain. The immediate electron acceptor for the enzyme in this species is believed to be plastoquinone. Couples the redox reaction to proton translocation, and thus conserves the redox energy in a proton gradient. This chain is NAD(P)H-quinone oxidoreductase subunit I, chloroplastic, found in Agrostis stolonifera (Creeping bentgrass).